The following is a 208-amino-acid chain: Large ribosomal subunit protein uL4 (208 aa).

Positions 42–77 (SMRQGTHKTKTKTEVSGGGRKPWRQKGTGRARQGSI) are disordered.

The protein belongs to the universal ribosomal protein uL4 family. In terms of assembly, part of the 50S ribosomal subunit.

One of the primary rRNA binding proteins, this protein initially binds near the 5'-end of the 23S rRNA. It is important during the early stages of 50S assembly. It makes multiple contacts with different domains of the 23S rRNA in the assembled 50S subunit and ribosome. In terms of biological role, forms part of the polypeptide exit tunnel. The polypeptide is Large ribosomal subunit protein uL4 (Spiroplasma kunkelii).